The sequence spans 678 residues: Glycine--tRNA ligase beta subunit (678 aa).

The protein belongs to the class-II aminoacyl-tRNA synthetase family. In terms of assembly, tetramer of two alpha and two beta subunits.

It is found in the cytoplasm. The enzyme catalyses tRNA(Gly) + glycine + ATP = glycyl-tRNA(Gly) + AMP + diphosphate. The chain is Glycine--tRNA ligase beta subunit from Streptococcus pneumoniae (strain 70585).